The following is a 291-amino-acid chain: Shikimate dehydrogenase (NADP(+)) (291 aa).

Shikimate-binding positions include 26–28 and Ser-73; that span reads SLS. The Proton acceptor role is filled by Lys-77. Residues Asn-98 and Asp-113 each contribute to the shikimate site. NADP(+) contacts are provided by residues 137 to 141 and Val-238; that span reads GAGGA. Tyr-240 lines the shikimate pocket. Gly-261 contributes to the NADP(+) binding site.

This sequence belongs to the shikimate dehydrogenase family. As to quaternary structure, homodimer.

The catalysed reaction is shikimate + NADP(+) = 3-dehydroshikimate + NADPH + H(+). It participates in metabolic intermediate biosynthesis; chorismate biosynthesis; chorismate from D-erythrose 4-phosphate and phosphoenolpyruvate: step 4/7. In terms of biological role, involved in the biosynthesis of the chorismate, which leads to the biosynthesis of aromatic amino acids. Catalyzes the reversible NADPH linked reduction of 3-dehydroshikimate (DHSA) to yield shikimate (SA). The chain is Shikimate dehydrogenase (NADP(+)) from Listeria innocua serovar 6a (strain ATCC BAA-680 / CLIP 11262).